Here is a 333-residue protein sequence, read N- to C-terminus: MSEPSEKKQKVATSSLEQLKKAGTHVVADSGDFEAISKYEPQDSTTNPSLILAASKLEKYARFIDAAVEYGRKHGKTDHEKIENAMDKILVEFGTQILKVVPGRVSTEVDARLSFDKKATVKKALHIIKLYKDAGVPKERVLIKIASTWEGIQAARELEVKHGIHCNMTLLFSFTQAVACAEANVTLISPFVGRIMDFYKALSGKDYTAETDPGVLSVKKIYSYYKRHGYATEVMAASFRNLDELKALAGIDNMTLPLNLLEQLYESTDPIENKLNSESAKEEGVEKVSFINDEPHFRYVLNEDQMATEKLSDGIRKFSADIEALYKLVEEKM.

The Schiff-base intermediate with substrate role is filled by K144.

It belongs to the transaldolase family. Type 1 subfamily. As to quaternary structure, homodimer.

The enzyme catalyses D-sedoheptulose 7-phosphate + D-glyceraldehyde 3-phosphate = D-erythrose 4-phosphate + beta-D-fructose 6-phosphate. Its pathway is carbohydrate degradation; pentose phosphate pathway; D-glyceraldehyde 3-phosphate and beta-D-fructose 6-phosphate from D-ribose 5-phosphate and D-xylulose 5-phosphate (non-oxidative stage): step 2/3. Its function is as follows. Transaldolase is important for the balance of metabolites in the pentose-phosphate pathway. This chain is Transaldolase NQM1 (NQM1), found in Saccharomyces cerevisiae (strain ATCC 204508 / S288c) (Baker's yeast).